Reading from the N-terminus, the 474-residue chain is Immunoglobulin heavy constant mu (474 aa).

The segment at 1–105 is CH1; it reads GSASAPTLFP…NKEKNVPLPV (105 aa). Residues 1–450 are Extracellular-facing; it reads GSASAPTLFP…EEGFENLWAT (450 aa). Ig-like domains lie at 6–102, 111–211, 229–319, and 329–430; these read PTLF…KNVP, PKVS…QNAS, PSFA…QTIS, and PDVY…RTVD. Intrachain disulfides connect C28-C88 and C134-C197. Residue N46 is glycosylated (N-linked (GlcNAc...) (complex) asparagine). The interval 106–217 is CH2; the sequence is IAELPPKVSV…QNASSMCVPD (112 aa). N209 carries N-linked (GlcNAc...) (complex) asparagine glycosylation. The interval 218–323 is CH3; it reads QDTAIRVFAI…LKQTISRPKG (106 aa). 2 disulfide bridges follow: C244/C303 and C351/C413. N-linked (GlcNAc...) asparagine glycans are attached at residues N272 and N279. The interval 324–452 is CH4; the sequence is VALHRPDVYL…GFENLWATAS (129 aa). Residues 437-453 form an important for IgM oligomerization region; that stretch reads VSADEEGFENLWATAST. N-linked (GlcNAc...) asparagine glycosylation is present at D440. A helical transmembrane segment spans residues 451–471; the sequence is ASTFIVLFLLSLFYSTTVTLF. At 472 to 474 the chain is on the cytoplasmic side; sequence KVK.

As to quaternary structure, the basic structural unit of both sIgM and mIgM molecules consists of two identical heavy chains and two identical light chains; disulfide-linked. N-terminal variable regions of the heavy and light chains form the antigen binding sites, whereas the C-terminal constant regions of the heavy chains interact with immune receptors to mediate effector functions. Part of IgM antibody. Forms high order oligomers, homopentamers stabilized by the JCHAIN and homohexamers that lack JCHAIN. The oligomerization amplifies an inherently low affinity of IgM antibodies for the antigen by multi-point attachment (avidity). Adjacent IgM protomers associate via interchain disulfide links to form an asymmetric pentameric structure with a 50 degree gap. A single copy of JCHAIN is covalently linked to the first and the fifth IgM monomers via interchain disulfide bonds thus closing the pentamer ring. Only JCHAIN-containing IgM binds PIGR secretory component (via D1-CDR1 region); this interaction is a prerequisite for IgM transcytosis across mucosal epithelium. Pentameric sIgM interacts (via CH4 domain) with FCRM (via Ig-like domain); the interaction is glycan-independent and multivalent theoretically involving up to eight binding sites for the IgM pentamer. Interacts with FCAMR; this interaction facilitates the endocytosis of IgM-coated microbes or IgM-antigen immune complexes. Antigen-bound IgM (via the Fc region) binds to globular domains of C1q component of the complement system, all three modules C1QA, C1QB and C1QC being involved in IgM binding; this interaction is multivalent. Pentameric sIgM (via Fc region) interacts with CD5L (via SRCR2) through interchain disulfide-linkages; this interaction protects CD5L from renal excretion and provides for high levels of CD5L in circulation. In terms of assembly, part of IgM B cell receptor complex on pre-B cells, immature and mature B cells. The BCR complex consists of one membrane-bound IgM molecule responsible for antigen binding, non-covalently associated with CD79A and CD79B signaling chains. N-glycosylated; important for IgM secretion and its localization at the plasma membrane. The interaction with FCMR is glycan-independent.

The protein resides in the secreted. Its subcellular location is the cell membrane. Functionally, constant region of immunoglobulin heavy chains. Immunoglobulins, also known as antibodies, are membrane-bound or secreted glycoproteins produced by B lymphocytes. In the recognition phase of humoral immunity, the membrane-bound immunoglobulins serve as receptors which, upon binding of a specific antigen, trigger the clonal expansion and differentiation of B lymphocytes into immunoglobulins-secreting plasma cells. Secreted immunoglobulins mediate the effector phase of humoral immunity, which results in the elimination of bound antigens. The antigen binding site is formed by the variable domain of one heavy chain, together with that of its associated light chain. Thus, each immunoglobulin has two antigen binding sites with remarkable affinity for a particular antigen. The variable domains are assembled by a process called V-(D)-J rearrangement and can then be subjected to somatic hypermutations which, after exposure to antigen and selection, allow affinity maturation for a particular antigen. In terms of biological role, constant region of secreted IgM (sIgM), also known as the Fc region of IgM antibody. Able to multimerize, forms high order polymers, mainly pentamers and occasionally hexamers, providing for multivalency and high avidity recognition of antigens. Natural sIgM are polyreactive and recognize conserved self- and pathogen-derived structures, whereas immune sIgM are secreted only upon exposure to pathogens and are antigen-specific. Both natural and immune sIgM are required for an efficient humoral immune response to infection. Mediates sIgM effector functions mostly via Fc receptors and the complement system. On lymphoid cells binds high-affinity Fc receptor FCMR and promotes induction of an efficient neutralizing IgG response while maintaining tolerance to self-antigens. Recruits C1q complement component to initiate the classical complement pathway, facilitating the recognition and neutralization of pathogens by the host. Together with C1q and mannose-binding lectin promotes the phagocytosis of apoptotic cells by macrophages, ensuring the clearance of potential autoimmune epitopes from tissues. Involved in mucosal immunity. It is transported by transcytosis across mucosal epithelium by PIGR and secreted on the apical side in complex with PIGR secretory component to scan mucosal lining for pathogens. IgM-antigen complexes undergo FCMR-mediated retrotranscytosis across mucosal M cells toward antigen-presenting cells in mucosal lymphoid tissues. Its function is as follows. Constant region of membrane-bound IgM, part of the B cell receptor complex (BCR). IgM BCR provides constitutive tonic signaling for B cell survival. Mediates pre-BCR signaling that regulates B cell selection and rearrangement of Ig genes via allelic exclusion. The sequence is that of Immunoglobulin heavy constant mu from Homo sapiens (Human).